A 439-amino-acid chain; its full sequence is Histidine--tRNA ligase (439 aa).

It belongs to the class-II aminoacyl-tRNA synthetase family. Homodimer.

The protein resides in the cytoplasm. The enzyme catalyses tRNA(His) + L-histidine + ATP = L-histidyl-tRNA(His) + AMP + diphosphate + H(+). The protein is Histidine--tRNA ligase of Clostridium tetani (strain Massachusetts / E88).